The following is a 210-amino-acid chain: Sortase A (210 aa).

Residues 1-5 (MNKQR) lie on the Cytoplasmic side of the membrane. Residues 6–26 (IYSIVAILLFVVGGVLIGKPF) form a helical membrane-spanning segment. Residues 27–210 (YDGYQAEKKQ…GDLVGTKAKK (184 aa)) lie on the Extracellular side of the membrane. Histidine 126 functions as the Proton donor/acceptor in the catalytic mechanism. The Acyl-thioester intermediate role is filled by cysteine 187.

It belongs to the bacterial sortase family. Class A subfamily.

Its subcellular location is the cell membrane. Its activity is regulated as follows. Inhibited by thiol-reactive reagents. Its function is as follows. Transpeptidase that anchors surface proteins to the cell wall. Recognizes and modifies its substrate by proteolytic cleavage of a C-terminal sorting signal. Following cleavage, a covalent intermediate is formed via a thioester bond between the sortase and its substrate, which is then transferred and covalently attached to the cell wall. This sortase recognizes a Leu-Pro-x-Thr-Gly (LPXTG) motif, which is cleaved by the sortase between the threonine and glycine residues. Important for growth in macrophages. May be critical in the early stages of inhalation anthrax. The protein is Sortase A of Bacillus anthracis.